The chain runs to 835 residues: Invasin (835 aa).

Positions 451–541 constitute a Big-1 domain; the sequence is VITSEVTDDG…QQATVDVRFA (91 aa).

Belongs to the intimin/invasin family.

It is found in the cell outer membrane. Invasin is a protein that allows enteric bacteria to penetrate cultured mammalian cells. The entry of invasin in the cell is mediated by binding several beta-1 chain integrins. This Yersinia enterocolitica protein is Invasin.